Consider the following 78-residue polypeptide: Large ribosomal subunit protein bL28 (78 aa).

Residues 1 to 25 (MSRVCQVTGKRPAVGNNRSHAKNAT) are disordered.

It belongs to the bacterial ribosomal protein bL28 family.

This Aliivibrio fischeri (strain ATCC 700601 / ES114) (Vibrio fischeri) protein is Large ribosomal subunit protein bL28.